A 666-amino-acid polypeptide reads, in one-letter code: 7SK snRNA methylphosphate capping enzyme (666 aa).

At Met1 the chain carries N-acetylmethionine. Residues 1–10 (MIEMAAEKEP) are compositionally biased toward basic and acidic residues. A disordered region spans residues 1-141 (MIEMAAEKEP…GSGGSFKHPA (141 aa)). Residues 50 to 61 (GPGPRAHSAGAA) show a composition bias toward low complexity. At Ser57 the chain carries Phosphoserine. Residue Arg91 is modified to Omega-N-methylarginine. Phosphoserine is present on residues Ser126, Ser150, and Ser154. At Thr188 the chain carries Phosphothreonine. 3 positions are modified to phosphoserine: Ser191, Ser192, and Ser229. Residues 235–244 (RKRHRHRGPH) show a composition bias toward basic residues. A disordered region spans residues 235–291 (RKRHRHRGPHHQQQQQASGGNDSNAAVLPTDPLTPSLHGEGATQQQQNRGQNRDAPQ). Positions 245–254 (HQQQQQASGG) are enriched in low complexity. At Thr268 the chain carries Phosphothreonine. 2 positions are modified to phosphoserine: Ser307 and Ser321. Over residues 309–337 (LPSALQGSSGSLSAPPAASVTSAPSTSSS) the composition is skewed to low complexity. The tract at residues 309–383 (LPSALQGSSG…HHHPLPATGF (75 aa)) is disordered. Residues 338–347 (SRHRKRRRTS) are compositionally biased toward basic residues. Ser368 is subject to Phosphoserine. Residues Tyr399, Arg410, 428 to 430 (GCN), 451 to 452 (DI), 536 to 537 (NY), and Phe558 each bind S-adenosyl-L-methionine. One can recognise a Bin3-type SAM domain in the interval 408–663 (DVRLRVLKPE…PVYLFHKARS (256 aa)). Lys620 is covalently cross-linked (Glycyl lysine isopeptide (Lys-Gly) (interchain with G-Cter in SUMO2)).

It belongs to the methyltransferase superfamily. Core component of the 7SK RNP complex, at least composed of 7SK RNA, LARP7, MEPCE, HEXIM1 (or HEXIM2) and P-TEFb (composed of CDK9 and CCNT1/cyclin-T1). Interacts with METTL16. Interacts with RBM7; upon genotoxic stress this interaction is enhanced, triggering the release of inactive P-TEFb complex from the core, yielding to P-TEFb complex activation. In terms of processing, dephosphorylated at Ser-126 by the PNUTS-PP1 complex, promoting RNA polymerase II transcription pause-release.

The protein localises to the nucleus. The enzyme catalyses a 5'-end triphospho-guanosine-ribonucleotide-snRNA + S-adenosyl-L-methionine = a 5'-end methyltriphosphate-guanosine-ribonucleotide-snRNA + S-adenosyl-L-homocysteine. In terms of biological role, S-adenosyl-L-methionine-dependent methyltransferase that adds a methylphosphate cap at the 5'-end of 7SK snRNA (7SK RNA), leading to stabilize it. Also has a non-enzymatic function as part of the 7SK RNP complex: the 7SK RNP complex sequesters the positive transcription elongation factor b (P-TEFb) in a large inactive 7SK RNP complex preventing RNA polymerase II phosphorylation and subsequent transcriptional elongation. The 7SK RNP complex also promotes snRNA gene transcription by RNA polymerase II via interaction with the little elongation complex (LEC). In the 7SK RNP complex, MEPCE is required to stabilize 7SK RNA and facilitate the assembly of 7SK RNP complex. MEPCE has a non-enzymatic function in the 7SK RNP complex; it has a non-enzymatic function; interaction with LARP7 within the 7SK RNP complex occluding its catalytic center. Also required for stability of U6 snRNAs. This is 7SK snRNA methylphosphate capping enzyme from Mus musculus (Mouse).